A 488-amino-acid polypeptide reads, in one-letter code: Probable G-protein coupled receptor Mth-like 12 (488 aa).

The first 17 residues, 1-17 (MFLWLKCFCTLIIVTIA), serve as a signal peptide directing secretion. At 18-215 (KNSSAKIPHC…NRRCYRNVMP (198 aa)) the chain is on the extracellular side. N-linked (GlcNAc...) asparagine glycosylation is found at Asn19, Asn34, and Asn55. 5 disulfides stabilise this stretch: Cys27/Cys81, Cys83/Cys88, Cys92/Cys189, Cys93/Cys104, and Cys155/Cys209. N-linked (GlcNAc...) asparagine glycosylation occurs at Asn141. The chain crosses the membrane as a helical span at residues 216–236 (GIAQLSVISVVGFILTLAVYL). Residues 237–247 (SVEKLRNLLGK) are Cytoplasmic-facing. A helical transmembrane segment spans residues 248–268 (CLICSLFSMFMEYFIWTMDYF). The Extracellular portion of the chain corresponds to 269–283 (RLLQSICSAAGYMKY). The helical transmembrane segment at 284-304 (FFSMSSYLWFSVVSFHLWELF) threads the bilayer. The Cytoplasmic segment spans residues 305-315 (TSLNRHEPQYR). A helical transmembrane segment spans residues 316 to 336 (FLIYNTFVWCTAAIPTVVIFS). The Extracellular portion of the chain corresponds to 337 to 373 (MNQMWENDPGKSEWLPLVGYFGCSVKDWNSSSWFYSH). A glycan (N-linked (GlcNAc...) asparagine) is linked at Asn365. The helical transmembrane segment at 374–394 (IPIVILNSFNVIMFVLTAIYI) threads the bilayer. Over 395–416 (WKVKKGVKSFAQHDERNTTCLE) the chain is Cytoplasmic. Residues 417 to 437 (FNVQTYIQFVRLFLIMGASWL) traverse the membrane as a helical segment. The Extracellular portion of the chain corresponds to 438–454 (LDQLTRLAEDSHLLLDT). The chain crosses the membrane as a helical span at residues 455–475 (IVLNLTVYLNAAFGILIFVLL). Over 476–488 (ILKGSTFKMIMER) the chain is Cytoplasmic.

The protein belongs to the G-protein coupled receptor 2 family. Mth subfamily.

It localises to the cell membrane. In Drosophila melanogaster (Fruit fly), this protein is Probable G-protein coupled receptor Mth-like 12 (mthl12).